Reading from the N-terminus, the 619-residue chain is uncharacterized protein (619 aa).

The N-terminal stretch at 1-21 (MKKLIAIIAVAAVVIAGFVFT) is a signal peptide.

This is an uncharacterized protein from Archaeoglobus fulgidus (strain ATCC 49558 / DSM 4304 / JCM 9628 / NBRC 100126 / VC-16).